A 211-amino-acid chain; its full sequence is FMN-dependent NADH:quinone oxidoreductase 3 (211 aa).

102 to 105 (MWNF) is a binding site for FMN.

This sequence belongs to the azoreductase type 1 family. Homodimer. FMN serves as cofactor.

It catalyses the reaction 2 a quinone + NADH + H(+) = 2 a 1,4-benzosemiquinone + NAD(+). The enzyme catalyses N,N-dimethyl-1,4-phenylenediamine + anthranilate + 2 NAD(+) = 2-(4-dimethylaminophenyl)diazenylbenzoate + 2 NADH + 2 H(+). Quinone reductase that provides resistance to thiol-specific stress caused by electrophilic quinones. Its function is as follows. Also exhibits azoreductase activity. Catalyzes the reductive cleavage of the azo bond in aromatic azo compounds to the corresponding amines. The chain is FMN-dependent NADH:quinone oxidoreductase 3 from Bacillus cereus (strain ZK / E33L).